The primary structure comprises 559 residues: MNFNSSYNLTFNDVFFSSSSSSDPLVSRRLFLLRDVQILELLIAIFVFVAIHALRQKKYQGLPVWPFLGMLPSLAFGLRGNIYEWLSDVLCLQNGTFQFRGPWFSSLNSTITCDPRNVEHLLKNRFSVFPKGSYFRDNLRDLLGDGIFNADDETWQRQRKTASIEFHSAKFRQLTTQSLFELVHKRLLPVLETSVKSSSPIDLQDVLLRLTFDNVCMIAFGVDPGCLGPDQPVIPFAKAFEDATEAAVVRFVMPTCVWKFMRYLDIGTEKKLKESIKGVDDFADEVIRTRKKELSLEGETTKRSDLLTVFMGLRDEKGESFSDKFLRDICVNFILAGRDTSSVALSWFFWLLEKNPEVEEKIMVEMCKILRQRDDHGNAEKSDYEPVFGPEEIKKMDYLQAALSEALRLYPSVPVDHKEVQEDDVFPDGTMLKKGDKVIYAIYAMGRMEAIWGKDCLEFRPERWLRDGRFMSESAYKFTAFNGGPRLCLGKDFAYYQMKSTAAAIVYRYKVKVVNGHKVEPKLALTMYMKHGLMVNLINRSVSEIDQYYAKSFDEGYIN.

The chain crosses the membrane as a helical span at residues Phe31–Ile51. Cys488 lines the heme pocket.

Belongs to the cytochrome P450 family. Heme serves as cofactor. As to expression, expressed in roots endodermis, anthers, stigmas, stomata of young pedicels of inflorescences, the placenta region of siliques, at the level of the hilum in matures seeds, at the junction of siliques to pedicels where abscission of floral parts takes place and in nectary glands.

The protein resides in the endoplasmic reticulum membrane. Its function is as follows. Involved in very long chain fatty acids (VLCFA) omega-hydroxylation. Required for the synthesis of saturated VLCFA alpha, omega-bifunctional suberin monomers. This chain is Cytochrome P450 86B1 (CYP86B1), found in Arabidopsis thaliana (Mouse-ear cress).